A 1984-amino-acid polypeptide reads, in one-letter code: Sodium channel protein type 9 subunit alpha (1984 aa).

Topologically, residues 1-125 (MAMLPPPGPQ…RRISIKILVH (125 aa)) are cytoplasmic. Over residues 26 to 47 (RIAEGKTKEPKEEKKDDHDEGP) the composition is skewed to basic and acidic residues. The disordered stretch occupies residues 26 to 55 (RIAEGKTKEPKEEKKDDHDEGPKPSSDLEA). The I repeat unit spans residues 112–408 (FSPLRRISIK…VAMAYEEQNQ (297 aa)). Residues 126-145 (SLFSMLIMCTILTNCIFMTM) traverse the membrane as a helical segment. The Extracellular portion of the chain corresponds to 146 to 150 (NNPAE). Residues 151-172 (WTKNVEYTFTGIYTFESLVKIF) traverse the membrane as a helical segment. Residues 173 to 185 (ARGFCVGEFTFLR) lie on the Cytoplasmic side of the membrane. A helical membrane pass occupies residues 186-204 (DPWNWLDFIVIVFAYLTEF). At 205–210 (VNLGNV) the chain is on the extracellular side. Residue asparagine 209 is glycosylated (N-linked (GlcNAc...) asparagine). Residues 211–227 (SALRTFRVLRALKTISV) form a helical membrane-spanning segment. The Cytoplasmic segment spans residues 228-241 (IPGLKTIVGALIQS). The chain crosses the membrane as a helical span at residues 242–267 (VKKLSDVIILTVFCLSVFALIGLQLF). Topologically, residues 268-344 (MGHLKHKCLR…PDYGYTSFDT (77 aa)) are extracellular. Residues cysteine 275 and cysteine 322 are joined by a disulfide bond. N-linked (GlcNAc...) asparagine glycosylation is present at asparagine 281. The pore-forming intramembrane region spans 345–361 (FSWAFLALFRLMTQDYW). At 362–374 (ENLYQQTLRAAGK) the chain is on the extracellular side. A helical membrane pass occupies residues 375 to 400 (TYMIFFVVVIFLGSFYLINLILAVVA). The Cytoplasmic portion of the chain corresponds to 401–742 (MAYEEQNQAN…FIYIIVMDPF (342 aa)). Over residues 459–469 (SSSETSKLSSK) the composition is skewed to low complexity. Disordered regions lie at residues 459–517 (SSSE…LGVE) and 563–610 (GSET…PPML). Over residues 472 to 484 (KERRNRRKKKNQK) the composition is skewed to basic residues. Basic and acidic residues-rich tracts occupy residues 487–508 (SSGE…ESIS) and 571–583 (DEHS…ESRR). Residues 723–986 (CSPFWIKFKK…EEDTDANNLQ (264 aa)) form an II repeat. Residues 743-759 (VDLAITICIVLNTLFMA) traverse the membrane as a helical segment. Residues 760–768 (MEHHPMTEE) are Extracellular-facing. Residues 769 to 793 (FKNVLVVGNLVFTGIFAAEMVLKLI) traverse the membrane as a helical segment. Over 794–802 (AMDPYEYFQ) the chain is Cytoplasmic. Residues 803-819 (VGWNVFDSLIVTLSLVE) form a helical membrane-spanning segment. The Extracellular segment spans residues 820–828 (LFLADVEGL). Residues 829 to 845 (SVLRSFRLLRVFKLAKS) traverse the membrane as a helical segment. The Cytoplasmic portion of the chain corresponds to 846–862 (WPTLNMLIKIIGNSVGP). The helical transmembrane segment at 863–885 (LGNLTLVLAIIVFIFAVVGMQLF) threads the bilayer. At 886–912 (GKSYKECVCKINDDCSLPRWHMNDFFH) the chain is on the extracellular side. Cysteine 894 and cysteine 900 form a disulfide bridge. An intramembrane region (pore-forming) is located at residues 913-925 (SFLIVFRVLCGEW). Residues 926-937 (IETMWDCMEVAG) are Extracellular-facing. A disulfide bridge links cysteine 932 with cysteine 941. A helical transmembrane segment spans residues 938–964 (QAMCLIVYMMVMVIGNLVVLNLFLALL). Topologically, residues 965–1184 (LSSFSSDNLS…WWNIRKTCYR (220 aa)) are cytoplasmic. The disordered stretch occupies residues 1087–1146 (PIAPGESDLENMNTEELSSDSESEYSKERLNRSSSSECSTVDNALPGEGEEAEAEPVNSD). Residues 1118–1128 (RSSSSECSTVD) are compositionally biased toward polar residues. Over residues 1134-1146 (EGEEAEAEPVNSD) the composition is skewed to acidic residues. The stretch at 1177 to 1485 (NIRKTCYRIV…KKYYNAMKKL (309 aa)) is one III repeat. Residues 1185–1209 (IVEHSWFESFIVLMILLSSGALAFE) form a helical membrane-spanning segment. Residues 1210–1221 (DIYIEKKKTIKI) are Extracellular-facing. A helical membrane pass occupies residues 1222–1247 (ILEYADKIFTYIFILEMLLKWVAYGY). At 1248 to 1249 (KT) the chain is on the cytoplasmic side. The helical transmembrane segment at 1250–1275 (YFTNAWCWLDFLIVDVSLVTLVANTL) threads the bilayer. Residues 1276–1284 (GYSDLGPIK) are Extracellular-facing. A helical transmembrane segment spans residues 1285-1301 (SLRTLRALRPLRALSRF). The Cytoplasmic portion of the chain corresponds to 1302-1314 (EGMRVVVNALIGA). A helical transmembrane segment spans residues 1315 to 1339 (IPSIMNVLLVCLIFWLIFSIMGVNL). Residues 1340-1391 (FAGKFYQCVNTTDDSRFPTKQVSNRSECFALMNGSQNVRWKNLKVNFDNVGL) lie on the Extracellular side of the membrane. A disulfide bridge connects residues cysteine 1347 and cysteine 1367. N-linked (GlcNAc...) asparagine glycans are attached at residues asparagine 1349, asparagine 1363, and asparagine 1372. An intramembrane region (pore-forming) is located at residues 1392 to 1402 (RYLSLLQVATF). Residues 1403 to 1428 (KGWMDIMYAAVDSVNVDQQPSYEHNL) are Extracellular-facing. A helical membrane pass occupies residues 1429–1454 (YMYIYFVIFIIFGSFFTLNLFIGVII). Topologically, residues 1455-1511 (DNFNQQKKKLGGQDIFMTEEQKKYYNAMKKLGSKKPQKPIPRPGNKFQGCIFDLVTN) are cytoplasmic. Phosphoserine; by PKC is present on serine 1487. The IV repeat unit spans residues 1494–1792 (IPRPGNKFQG…WEKFDPDATQ (299 aa)). A helical transmembrane segment spans residues 1512 to 1531 (QAFDITIMILICLNMVTMMV). The Extracellular portion of the chain corresponds to 1532–1542 (EKEGQSDYMTD). Residues 1543-1564 (VLYWINVVFIILFTGECVLKLI) traverse the membrane as a helical segment. Residues 1565-1573 (SLRHYYFTI) are Cytoplasmic-facing. Residues 1574–1595 (GWNIFDFVVVILSIVGMFLAEL) traverse the membrane as a helical segment. Topologically, residues 1596–1604 (IETYFVSPT) are extracellular. The chain crosses the membrane as a helical span at residues 1605-1624 (LFRVIRLARIGRILRLIKGA). At 1625-1637 (KGIRTLLFALMMS) the chain is on the cytoplasmic side. The helical transmembrane segment at 1638–1660 (LPALFNIGLLLFLVMFIYAIFGM) threads the bilayer. Residues 1661-1683 (SNFAYVKKEAGINDMFNFETFGN) are Extracellular-facing. An intramembrane region (pore-forming) is located at residues 1684–1696 (SMICLFQITTSAG). Over 1697 to 1730 (WDGLLAPILNSAPPDCDPKKVHPGSSTEGDCGSP) the chain is Extracellular. Cysteine 1712 and cysteine 1727 form a disulfide bridge. The chain crosses the membrane as a helical span at residues 1731–1756 (SVGIFYFVSYIIISFLVVVNMYIAVI). The Cytoplasmic segment spans residues 1757 to 1984 (LENFSVATEE…KGKDGKETKK (228 aa)). Positions 1886 to 1915 (EDVSATVIQRAYRRYRLRQNVKNISSIYIK) constitute an IQ domain. Positions 1924-1984 (PNKGDIVFDN…KGKDGKETKK (61 aa)) are disordered. Polar residues predominate over residues 1933 to 1956 (NVNSSSPEKTDATASTISPPSYDS). The segment covering 1958 to 1984 (TKPDKEKYEKDKTEKEDKGKDGKETKK) has biased composition (basic and acidic residues).

It belongs to the sodium channel (TC 1.A.1.10) family. Nav1.7/SCN9A subfamily. As to quaternary structure, the Nav1.7 voltage-gated sodium channel consists of an ion-conducting alpha subunit SCN9A which is functional on its own regulated by one or more beta-1 (SCN1B), beta-2 (SCN2B), beta-3 (SCN3B) and beta-4 (SCN4B) subunits. SCN1B and SCN3B are non-covalently associated with SCN9A. SCN2B and SCN4B are disulfide-linked to SCN9A. SCN1B regulates channel inactivation. Interacts with NEDD4 and NEDD4L; regulates Nav1.7 activity most probably through ubiquitination and subsequent endocytosis. Interacts with TMEM233; modulates the gating properties of NaV1.7. In terms of processing, phosphorylation at Ser-1487 by PKC in a highly conserved cytoplasmic loop increases peak sodium currents. Ubiquitinated by NEDD4L; which may promote its endocytosis. Expressed in the sciatic nerve, spinal cord, brainstem, cerebellum and cortex, but not expressed in the lung, skeletal and cardiac muscles, kidney and liver.

It localises to the cell membrane. The protein localises to the cell projection. The protein resides in the neuron projection. Its subcellular location is the axon. The catalysed reaction is Na(+)(in) = Na(+)(out). Functionally, pore-forming subunit of Nav1.7, a voltage-gated sodium (Nav) channel that directly mediates the depolarizing phase of action potentials in excitable membranes. Navs, also called VGSCs (voltage-gated sodium channels) or VDSCs (voltage-dependent sodium channels), operate by switching between closed and open conformations depending on the voltage difference across the membrane. In the open conformation they allow Na(+) ions to selectively pass through the pore, along their electrochemical gradient. The influx of Na(+) ions provokes membrane depolarization, initiating the propagation of electrical signals throughout cells and tissues. Nav1.7 plays a crucial role in controlling the excitability and action potential propagation from nociceptor neurons, thereby contributing to the sensory perception of pain. The sequence is that of Sodium channel protein type 9 subunit alpha from Oryctolagus cuniculus (Rabbit).